Reading from the N-terminus, the 503-residue chain is Probable cytosol aminopeptidase (503 aa).

Mn(2+)-binding residues include Lys-274 and Asp-279. Residue Lys-286 is part of the active site. Mn(2+)-binding residues include Asp-297, Asp-356, and Glu-358. Arg-360 is an active-site residue.

The protein belongs to the peptidase M17 family. Mn(2+) serves as cofactor.

The protein localises to the cytoplasm. It carries out the reaction Release of an N-terminal amino acid, Xaa-|-Yaa-, in which Xaa is preferably Leu, but may be other amino acids including Pro although not Arg or Lys, and Yaa may be Pro. Amino acid amides and methyl esters are also readily hydrolyzed, but rates on arylamides are exceedingly low.. It catalyses the reaction Release of an N-terminal amino acid, preferentially leucine, but not glutamic or aspartic acids.. In terms of biological role, presumably involved in the processing and regular turnover of intracellular proteins. Catalyzes the removal of unsubstituted N-terminal amino acids from various peptides. This is Probable cytosol aminopeptidase from Burkholderia thailandensis (strain ATCC 700388 / DSM 13276 / CCUG 48851 / CIP 106301 / E264).